The primary structure comprises 290 residues: Probable septum site-determining protein MinC (290 aa).

This sequence belongs to the MinC family. As to quaternary structure, interacts with MinD and FtsZ.

In terms of biological role, cell division inhibitor that blocks the formation of polar Z ring septums. Rapidly oscillates between the poles of the cell to destabilize FtsZ filaments that have formed before they mature into polar Z rings. Prevents FtsZ polymerization. The sequence is that of Probable septum site-determining protein MinC from Heliobacterium modesticaldum (strain ATCC 51547 / Ice1).